The chain runs to 368 residues: Phospho-N-acetylmuramoyl-pentapeptide-transferase (368 aa).

The next 9 helical transmembrane spans lie at A30–L50, V72–A92, H98–Y118, V139–L159, F170–S190, G201–G221, A238–F258, P262–L284, and K345–L365.

It belongs to the glycosyltransferase 4 family. MraY subfamily. Mg(2+) serves as cofactor.

The protein resides in the cell inner membrane. The catalysed reaction is UDP-N-acetyl-alpha-D-muramoyl-L-alanyl-gamma-D-glutamyl-meso-2,6-diaminopimeloyl-D-alanyl-D-alanine + di-trans,octa-cis-undecaprenyl phosphate = di-trans,octa-cis-undecaprenyl diphospho-N-acetyl-alpha-D-muramoyl-L-alanyl-D-glutamyl-meso-2,6-diaminopimeloyl-D-alanyl-D-alanine + UMP. The protein operates within cell wall biogenesis; peptidoglycan biosynthesis. Functionally, catalyzes the initial step of the lipid cycle reactions in the biosynthesis of the cell wall peptidoglycan: transfers peptidoglycan precursor phospho-MurNAc-pentapeptide from UDP-MurNAc-pentapeptide onto the lipid carrier undecaprenyl phosphate, yielding undecaprenyl-pyrophosphoryl-MurNAc-pentapeptide, known as lipid I. The protein is Phospho-N-acetylmuramoyl-pentapeptide-transferase of Chlorobaculum parvum (strain DSM 263 / NCIMB 8327) (Chlorobium vibrioforme subsp. thiosulfatophilum).